The primary structure comprises 235 residues: Large ribosomal subunit protein uL1 (235 aa).

The protein belongs to the universal ribosomal protein uL1 family. In terms of assembly, part of the 50S ribosomal subunit.

Its function is as follows. Binds directly to 23S rRNA. The L1 stalk is quite mobile in the ribosome, and is involved in E site tRNA release. Functionally, protein L1 is also a translational repressor protein, it controls the translation of the L11 operon by binding to its mRNA. The protein is Large ribosomal subunit protein uL1 of Prochlorococcus marinus (strain MIT 9301).